We begin with the raw amino-acid sequence, 279 residues long: NADPH-dependent 7-cyano-7-deazaguanine reductase (279 aa).

Substrate is bound at residue 86-88 (IES). 88 to 89 (SK) provides a ligand contact to NADPH. Cys-187 (thioimide intermediate) is an active-site residue. The active-site Proton donor is Asp-194. 226 to 227 (HE) is a substrate binding site. Residue 255–256 (RG) coordinates NADPH.

The protein belongs to the GTP cyclohydrolase I family. QueF type 2 subfamily. As to quaternary structure, homodimer.

It is found in the cytoplasm. The catalysed reaction is 7-aminomethyl-7-carbaguanine + 2 NADP(+) = 7-cyano-7-deazaguanine + 2 NADPH + 3 H(+). It participates in tRNA modification; tRNA-queuosine biosynthesis. Functionally, catalyzes the NADPH-dependent reduction of 7-cyano-7-deazaguanine (preQ0) to 7-aminomethyl-7-deazaguanine (preQ1). This chain is NADPH-dependent 7-cyano-7-deazaguanine reductase, found in Glaesserella parasuis serovar 5 (strain SH0165) (Haemophilus parasuis).